A 419-amino-acid chain; its full sequence is UDP-N-acetylglucosamine 1-carboxyvinyltransferase 2 (419 aa).

22–23 (KN) contributes to the phosphoenolpyruvate binding site. Residue Arg92 coordinates UDP-N-acetyl-alpha-D-glucosamine. Cys116 (proton donor) is an active-site residue. 2-(S-cysteinyl)pyruvic acid O-phosphothioketal is present on Cys116. UDP-N-acetyl-alpha-D-glucosamine-binding positions include 121-125 (RPIDL), Asp306, and Ile328.

This sequence belongs to the EPSP synthase family. MurA subfamily.

Its subcellular location is the cytoplasm. The enzyme catalyses phosphoenolpyruvate + UDP-N-acetyl-alpha-D-glucosamine = UDP-N-acetyl-3-O-(1-carboxyvinyl)-alpha-D-glucosamine + phosphate. Its pathway is cell wall biogenesis; peptidoglycan biosynthesis. Its function is as follows. Cell wall formation. Adds enolpyruvyl to UDP-N-acetylglucosamine. In Streptococcus pyogenes serotype M3 (strain ATCC BAA-595 / MGAS315), this protein is UDP-N-acetylglucosamine 1-carboxyvinyltransferase 2.